A 260-amino-acid chain; its full sequence is Triosephosphate isomerase (260 aa).

11–13 (NWK) serves as a coordination point for substrate. Residue histidine 103 is the Electrophile of the active site. Glutamate 175 functions as the Proton acceptor in the catalytic mechanism. Substrate is bound by residues glycine 181, serine 220, and 241–242 (GG).

The protein belongs to the triosephosphate isomerase family. In terms of assembly, homodimer.

The protein resides in the cytoplasm. It carries out the reaction D-glyceraldehyde 3-phosphate = dihydroxyacetone phosphate. The protein operates within carbohydrate biosynthesis; gluconeogenesis. It participates in carbohydrate degradation; glycolysis; D-glyceraldehyde 3-phosphate from glycerone phosphate: step 1/1. Involved in the gluconeogenesis. Catalyzes stereospecifically the conversion of dihydroxyacetone phosphate (DHAP) to D-glyceraldehyde-3-phosphate (G3P). The sequence is that of Triosephosphate isomerase from Shewanella amazonensis (strain ATCC BAA-1098 / SB2B).